Reading from the N-terminus, the 269-residue chain is Glutamate racemase (269 aa).

Substrate is bound by residues 7–8 and 39–40; these read DS and YG. Cys70 (proton donor/acceptor) is an active-site residue. Residue 71–72 participates in substrate binding; it reads NT. Cys194 acts as the Proton donor/acceptor in catalysis. 195–196 is a substrate binding site; it reads TH.

This sequence belongs to the aspartate/glutamate racemases family.

It catalyses the reaction L-glutamate = D-glutamate. It functions in the pathway cell wall biogenesis; peptidoglycan biosynthesis. Its function is as follows. Provides the (R)-glutamate required for cell wall biosynthesis. In Ruegeria pomeroyi (strain ATCC 700808 / DSM 15171 / DSS-3) (Silicibacter pomeroyi), this protein is Glutamate racemase.